A 147-amino-acid polypeptide reads, in one-letter code: Small ribosomal subunit protein uS12 (147 aa).

This sequence belongs to the universal ribosomal protein uS12 family. Part of the 30S ribosomal subunit.

Functionally, with S4 and S5 plays an important role in translational accuracy. Located at the interface of the 30S and 50S subunits. The protein is Small ribosomal subunit protein uS12 of Pyrococcus horikoshii (strain ATCC 700860 / DSM 12428 / JCM 9974 / NBRC 100139 / OT-3).